The chain runs to 350 residues: WUSCHEL-related homeobox 1 (350 aa).

A DNA-binding region (homeobox; WUS-type) is located at residues 72–136 (MVSSRWNPTP…NHKARERQKR (65 aa)). A disordered region spans residues 283–308 (TNTETCHRNGDDNKDQEQHEDCSNGE).

Belongs to the WUS homeobox family.

Its subcellular location is the nucleus. Functionally, transcription factor which may be involved in developmental processes. In Arabidopsis thaliana (Mouse-ear cress), this protein is WUSCHEL-related homeobox 1 (WOX1).